Reading from the N-terminus, the 156-residue chain is SsrA-binding protein (156 aa).

The tract at residues 134-156 (RQTLREQQDKRESLRELRERNRR) is disordered.

It belongs to the SmpB family.

Its subcellular location is the cytoplasm. In terms of biological role, required for rescue of stalled ribosomes mediated by trans-translation. Binds to transfer-messenger RNA (tmRNA), required for stable association of tmRNA with ribosomes. tmRNA and SmpB together mimic tRNA shape, replacing the anticodon stem-loop with SmpB. tmRNA is encoded by the ssrA gene; the 2 termini fold to resemble tRNA(Ala) and it encodes a 'tag peptide', a short internal open reading frame. During trans-translation Ala-aminoacylated tmRNA acts like a tRNA, entering the A-site of stalled ribosomes, displacing the stalled mRNA. The ribosome then switches to translate the ORF on the tmRNA; the nascent peptide is terminated with the 'tag peptide' encoded by the tmRNA and targeted for degradation. The ribosome is freed to recommence translation, which seems to be the essential function of trans-translation. The chain is SsrA-binding protein from Paenarthrobacter aurescens (strain TC1).